The primary structure comprises 1406 residues: DNA-directed RNA polymerase subunit beta' (1406 aa).

Zn(2+) is bound by residues C70, C72, C85, and C88. 3 residues coordinate Mg(2+): D460, D462, and D464. Positions 814, 889, 896, and 899 each coordinate Zn(2+).

This sequence belongs to the RNA polymerase beta' chain family. In terms of assembly, the RNAP catalytic core consists of 2 alpha, 1 beta, 1 beta' and 1 omega subunit. When a sigma factor is associated with the core the holoenzyme is formed, which can initiate transcription. The cofactor is Mg(2+). It depends on Zn(2+) as a cofactor.

The enzyme catalyses RNA(n) + a ribonucleoside 5'-triphosphate = RNA(n+1) + diphosphate. In terms of biological role, DNA-dependent RNA polymerase catalyzes the transcription of DNA into RNA using the four ribonucleoside triphosphates as substrates. The chain is DNA-directed RNA polymerase subunit beta' from Stenotrophomonas maltophilia (strain K279a).